A 297-amino-acid chain; its full sequence is UDP-N-acetylenolpyruvoylglucosamine reductase (297 aa).

The FAD-binding PCMH-type domain occupies 27-191; it reads TGGNADIFVM…LDATFSLELE (165 aa). R170 is a catalytic residue. S220 functions as the Proton donor in the catalytic mechanism. The active site involves E290.

This sequence belongs to the MurB family. Requires FAD as cofactor.

Its subcellular location is the cytoplasm. The catalysed reaction is UDP-N-acetyl-alpha-D-muramate + NADP(+) = UDP-N-acetyl-3-O-(1-carboxyvinyl)-alpha-D-glucosamine + NADPH + H(+). It participates in cell wall biogenesis; peptidoglycan biosynthesis. Its function is as follows. Cell wall formation. This chain is UDP-N-acetylenolpyruvoylglucosamine reductase, found in Listeria welshimeri serovar 6b (strain ATCC 35897 / DSM 20650 / CCUG 15529 / CIP 8149 / NCTC 11857 / SLCC 5334 / V8).